The primary structure comprises 237 residues: Speedy protein E4 (237 aa).

Residues 1–61 (MASGQARPPF…KRKSEWSDES (61 aa)) form a disordered region.

The protein belongs to the Speedy/Ringo family. Predominantly expressed in testis.

This is Speedy protein E4 from Homo sapiens (Human).